Reading from the N-terminus, the 95-residue chain is TBK1 inhibitor DP96R (95 aa).

This sequence belongs to the asfivirus DP96R family.

Inhibits cGAS-STING-mediated type I IFN expression and NF-kB activation by inhibiting TBK1 and IKBKB/IKKB. Inhibits host TBK1 phosphorylation. This Ornithodoros (relapsing fever ticks) protein is TBK1 inhibitor DP96R.